The chain runs to 251 residues: Acidic leucine-rich nuclear phosphoprotein 32 family member B (251 aa).

LRR repeat units lie at residues 16 to 40 (PAAVRELVLDNCKSNDGKIEGLTAE), 43 to 64 (NLEFLSLINVGLISVSNLPKLP), and 65 to 84 (KLKKLELSENRIFGGLDMLA). Lysine 86 is modified (N6-acetyllysine). One copy of the LRR 4 repeat lies at 89-110 (NLTHLNLSGNKLKDISTLEPLK). The LRRCT domain maps to 123–161 (CEVTNLNDYRESVFKLLPQLTYLDGYDREDQEAPDSDAE). Positions 149-233 (DREDQEAPDS…DEDEDEEEEE (85 aa)) are enriched in acidic residues. Positions 149 to 251 (DREDQEAPDS…RETDDEGEDD (103 aa)) are disordered. At serine 158 the chain carries Phosphoserine. The span at 234–244 (GGKGEKRKRET) shows a compositional bias: basic and acidic residues. A Nuclear localization signal motif is present at residues 239 to 242 (KRKR). Threonine 244 bears the Phosphothreonine mark.

The protein belongs to the ANP32 family. As to quaternary structure, interacts with histones H3 and H4. Interacts with KLF5; this interaction induces promoter region-specific histone incorporation and inhibition of histone acetylation by ANP32B. In terms of assembly, (Microbial infection) Interacts with Sendai virus protein M. (Microbial infection) Interacts with Measles virus protein M. As to quaternary structure, (Microbial infection) Interacts with Hendra virus protein M; this interaction promotes nuclear localization of M. In terms of assembly, (Microbial infection) Interacts with influenza virus B protein PB2; this interaction strongly supports influenza B virus replication. In terms of processing, some glutamate residues are glycylated by TTLL8. This modification occurs exclusively on glutamate residues and results in a glycine chain on the gamma-carboxyl group. Directly cleaved by caspase-3/CASP3. As to expression, expressed in heart, lung, pancreas, prostate and in spleen, thymus and placenta.

The protein resides in the nucleus. It is found in the cytoplasm. Multifunctional protein that is involved in the regulation of many processes including cell proliferation, apoptosis, cell cycle progression or transcription. Regulates the proliferation of neuronal stem cells, differentiation of leukemic cells and progression from G1 to S phase of the cell cycle. As negative regulator of caspase-3-dependent apoptosis, may act as an antagonist of ANP32A in regulating tissue homeostasis. Exhibits histone chaperone properties, able to recruit histones to certain promoters, thus regulating the transcription of specific genes. Also plays an essential role in the nucleocytoplasmic transport of specific mRNAs via the uncommon nuclear mRNA export receptor XPO1/CRM1. Participates in the regulation of adequate adaptive immune responses by acting on mRNA expression and cell proliferation. Functionally, (Microbial infection) Plays an essential role in influenza A and B viral genome replication. Also plays a role in foamy virus mRNA export from the nucleus to the cytoplasm. In Homo sapiens (Human), this protein is Acidic leucine-rich nuclear phosphoprotein 32 family member B (ANP32B).